We begin with the raw amino-acid sequence, 261 residues long: Hydroxyethylthiazole kinase (261 aa).

Methionine 40 contributes to the substrate binding site. ATP is bound by residues lysine 116 and threonine 162. Glycine 189 lines the substrate pocket.

The protein belongs to the Thz kinase family. Requires Mg(2+) as cofactor.

It carries out the reaction 5-(2-hydroxyethyl)-4-methylthiazole + ATP = 4-methyl-5-(2-phosphooxyethyl)-thiazole + ADP + H(+). It participates in cofactor biosynthesis; thiamine diphosphate biosynthesis; 4-methyl-5-(2-phosphoethyl)-thiazole from 5-(2-hydroxyethyl)-4-methylthiazole: step 1/1. Its function is as follows. Catalyzes the phosphorylation of the hydroxyl group of 4-methyl-5-beta-hydroxyethylthiazole (THZ). In Methanosarcina mazei (strain ATCC BAA-159 / DSM 3647 / Goe1 / Go1 / JCM 11833 / OCM 88) (Methanosarcina frisia), this protein is Hydroxyethylthiazole kinase.